Reading from the N-terminus, the 234-residue chain is UPF0441 protein plu3956 (234 aa).

2 disordered regions span residues 105–129 and 149–234; these read QAGL…QQSG and SAPS…SVGG. Residues 110–127 show a composition bias toward low complexity; the sequence is TTTSSTSTNGEAQAQQQQ. Polar residues predominate over residues 150-175; sequence APSQPLFSSKSATSPANGQFVDSTGK. Composition is skewed to low complexity over residues 188–205 and 216–234; these read TVPK…TTIT and QSTM…SVGG.

This sequence belongs to the UPF0441 family.

In Photorhabdus laumondii subsp. laumondii (strain DSM 15139 / CIP 105565 / TT01) (Photorhabdus luminescens subsp. laumondii), this protein is UPF0441 protein plu3956.